We begin with the raw amino-acid sequence, 233 residues long: Bcl-2-like protein 1 (233 aa).

Residues S4–W24 carry the BH4 motif. The disordered stretch occupies residues F27–S73. A Phosphoserine; by PLK3 modification is found at S49. At S62 the chain carries Phosphoserine; by CDK1. A BH3 motif is present at residues V86 to R100. Positions E129–G148 match the BH1 motif. A BH2 motif is present at residues P180 to Y195. A helical membrane pass occupies residues F210–L226.

Belongs to the Bcl-2 family. In terms of assembly, homodimer. Interacts with BAD. Interacts with PGAM5. Interacts with HEBP2. Interacts with p53/TP53 and BBC3; interaction with BBC3 disrupts the interaction with p53/TP53. Interacts with ATP5F1A and ATP5F1B; the interactions mediate the association of isoform Bcl-X(L) with the mitochondrial membrane ATP synthase F(1)F(0) ATP synthase. Interacts with VDAC1. Interacts with BCL2L11 (via BH3). Interacts with RNF183. Interacts with GIMAP3/IAN4 and GIMAP5/IAN5. Interacts with GIMAP5 and HSPA8/HSC70; the interaction between HSPA8 and BCL2L1 is impaired in the absence of GIMAP5. Interacts with isoform 4 of CLU; this interaction releases and activates BAX and promotes cell death. As to quaternary structure, forms heterodimers with BAX, BAK or BCL2; heterodimerization with BAX does not seem to be required for anti-apoptotic activity. Interacts with isoform 1 of SIVA1; the interaction inhibits the anti-apoptotic activity. Interacts with IKZF3. Interacts with RTL10/BOP. Interacts with DNM1L and CLTA; DNM1L and BCL2L1 isoform BCL-X(L) may form a complex in synaptic vesicles that also contains clathrin and MFF. Interacts (via the loop between motifs BH4 and BH3) with NLRP1 (via LRR repeats), but not with NLRP2, NLRP3, NLRP4, PYCARD, nor MEFV. Interacts with BECN1. In terms of processing, proteolytically cleaved by caspases during apoptosis. The cleaved protein, lacking the BH4 motif, has pro-apoptotic activity. Phosphorylated on Ser-62 by CDK1. This phosphorylation is partial in normal mitotic cells, but complete in G2-arrested cells upon DNA-damage, thus promoting subsequent apoptosis probably by triggering caspases-mediated proteolysis. Phosphorylated by PLK3, leading to regulate the G2 checkpoint and progression to cytokinesis during mitosis. Phosphorylation at Ser-49 appears during the S phase and G2, disappears rapidly in early mitosis during prometaphase, metaphase and early anaphase, and re-appears during telophase and cytokinesis. Post-translationally, ubiquitinated by RNF183 during prolonged ER stress, leading to degradation by the proteosome. As to expression, widely expressed, with highest levels in the brain, thymus, bone marrow, and kidney. Bcl-X(L) and Bcl-X(delta-TM) expression is enhanced in B- and T-lymphocytes that have been activated.

It is found in the mitochondrion membrane. It localises to the nucleus membrane. The protein localises to the cytoplasm. The protein resides in the cytoskeleton. Its subcellular location is the microtubule organizing center. It is found in the centrosome. It localises to the mitochondrion inner membrane. The protein localises to the mitochondrion outer membrane. The protein resides in the mitochondrion matrix. Its subcellular location is the cytoplasmic vesicle. It is found in the secretory vesicle. It localises to the synaptic vesicle membrane. The protein localises to the cytosol. In terms of biological role, potent inhibitor of cell death. Inhibits activation of caspases. Appears to regulate cell death by blocking the voltage-dependent anion channel (VDAC) by binding to it and preventing the release of the caspase activator, CYC1, from the mitochondrial membrane. Also acts as a regulator of G2 checkpoint and progression to cytokinesis during mitosis. Functionally, isoform Bcl-X(L) also regulates presynaptic plasticity, including neurotransmitter release and recovery, number of axonal mitochondria as well as size and number of synaptic vesicle clusters. During synaptic stimulation, increases ATP availability from mitochondria through regulation of mitochondrial membrane ATP synthase F(1)F(0) activity and regulates endocytic vesicle retrieval in hippocampal neurons through association with DMN1L and stimulation of its GTPase activity in synaptic vesicles. May attenuate inflammation impairing NLRP1-inflammasome activation, hence CASP1 activation and IL1B release. Isoform Bcl-X(S) promotes apoptosis. The polypeptide is Bcl-2-like protein 1 (Bcl2l1) (Mus musculus (Mouse)).